The primary structure comprises 204 residues: Large ribosomal subunit protein bL9 (204 aa).

The segment at 180-204 is disordered; sequence DDIGGAASDDEGDAPAAAADEEESK. Positions 187 to 204 are enriched in acidic residues; that stretch reads SDDEGDAPAAAADEEESK.

It belongs to the bacterial ribosomal protein bL9 family.

Its function is as follows. Binds to the 23S rRNA. The chain is Large ribosomal subunit protein bL9 from Ruegeria sp. (strain TM1040) (Silicibacter sp.).